A 249-amino-acid chain; its full sequence is Serine 3-dehydrogenase (249 aa).

6 to 30 (LITGATSGFGQATARRFVKEGWKVI) is an NADP(+) binding site. A substrate-binding site is contributed by Ser-135. The active-site Proton acceptor is Tyr-148.

It belongs to the short-chain dehydrogenases/reductases (SDR) family. As to quaternary structure, homotetramer.

It catalyses the reaction L-serine + NADP(+) = aminoacetaldehyde + CO2 + NADPH. In terms of biological role, catalyzes the oxidation of the hydroxyl group of serine to form 2-aminomalonate semialdehyde which is spontaneously converted into 2-aminoacetaldehyde and CO(2). Also acts on D-serine, L-glycerate, D-glycerate and 2-methyl-DL-serine. Does not act on O-methyl-DL-serine and L-threonine. In Agrobacterium fabrum (strain C58 / ATCC 33970) (Agrobacterium tumefaciens (strain C58)), this protein is Serine 3-dehydrogenase (sdh).